We begin with the raw amino-acid sequence, 375 residues long: Succinyl-diaminopimelate desuccinylase (375 aa).

Position 66 (histidine 66) interacts with Zn(2+). The active site involves aspartate 68. Aspartate 99 serves as a coordination point for Zn(2+). Residue glutamate 133 is the Proton acceptor of the active site. Positions 134, 162, and 348 each coordinate Zn(2+).

The protein belongs to the peptidase M20A family. DapE subfamily. Homodimer. Zn(2+) serves as cofactor. Co(2+) is required as a cofactor.

The enzyme catalyses N-succinyl-(2S,6S)-2,6-diaminopimelate + H2O = (2S,6S)-2,6-diaminopimelate + succinate. The protein operates within amino-acid biosynthesis; L-lysine biosynthesis via DAP pathway; LL-2,6-diaminopimelate from (S)-tetrahydrodipicolinate (succinylase route): step 3/3. In terms of biological role, catalyzes the hydrolysis of N-succinyl-L,L-diaminopimelic acid (SDAP), forming succinate and LL-2,6-diaminopimelate (DAP), an intermediate involved in the bacterial biosynthesis of lysine and meso-diaminopimelic acid, an essential component of bacterial cell walls. The sequence is that of Succinyl-diaminopimelate desuccinylase from Aeromonas salmonicida (strain A449).